Reading from the N-terminus, the 1052-residue chain is Error-prone DNA polymerase (1052 aa).

Belongs to the DNA polymerase type-C family. DnaE2 subfamily.

The protein localises to the cytoplasm. It catalyses the reaction DNA(n) + a 2'-deoxyribonucleoside 5'-triphosphate = DNA(n+1) + diphosphate. Functionally, DNA polymerase involved in damage-induced mutagenesis and translesion synthesis (TLS). It is not the major replicative DNA polymerase. This is Error-prone DNA polymerase from Bordetella bronchiseptica (strain ATCC BAA-588 / NCTC 13252 / RB50) (Alcaligenes bronchisepticus).